The chain runs to 469 residues: Citrate synthase, mitochondrial (469 aa).

The N-terminal 30 residues, 1–30, are a transit peptide targeting the mitochondrion; that stretch reads MSFLTVSRLAPKLLNSKNATYFLVAARNAS. Catalysis depends on residues His-304 and His-350. Arg-359 provides a ligand contact to oxaloacetate. Residue Asp-405 is part of the active site. Residues Arg-431 and Arg-451 each contribute to the oxaloacetate site.

This sequence belongs to the citrate synthase family. In terms of assembly, homodimer.

The protein resides in the mitochondrion matrix. The enzyme catalyses oxaloacetate + acetyl-CoA + H2O = citrate + CoA + H(+). Its pathway is carbohydrate metabolism; tricarboxylic acid cycle; isocitrate from oxaloacetate: step 1/2. Its function is as follows. Key enzyme of the Krebs tricarboxylic acid cycle which catalyzes the synthesis of citrate from acetyl coenzyme A and oxaloacetate. This chain is Citrate synthase, mitochondrial (cs), found in Kajikia audax (Striped marlin).